The primary structure comprises 307 residues: Acetyl-coenzyme A carboxylase carboxyl transferase subunit beta (307 aa).

In terms of domain architecture, CoA carboxyltransferase N-terminal spans 25–294 (LWIKDPESGE…TEENGSRRLP (270 aa)).

It belongs to the AccD/PCCB family. As to quaternary structure, acetyl-CoA carboxylase is a heterohexamer composed of biotin carboxyl carrier protein (AccB), biotin carboxylase (AccC) and two subunits each of ACCase subunit alpha (AccA) and ACCase subunit beta (AccD).

It localises to the cytoplasm. The enzyme catalyses N(6)-carboxybiotinyl-L-lysyl-[protein] + acetyl-CoA = N(6)-biotinyl-L-lysyl-[protein] + malonyl-CoA. Its pathway is lipid metabolism; malonyl-CoA biosynthesis; malonyl-CoA from acetyl-CoA: step 1/1. Component of the acetyl coenzyme A carboxylase (ACC) complex. Biotin carboxylase (BC) catalyzes the carboxylation of biotin on its carrier protein (BCCP) and then the CO(2) group is transferred by the transcarboxylase to acetyl-CoA to form malonyl-CoA. The sequence is that of Acetyl-coenzyme A carboxylase carboxyl transferase subunit beta from Chelativorans sp. (strain BNC1).